The sequence spans 265 residues: Uroporphyrinogen-III synthase (265 aa).

The protein belongs to the uroporphyrinogen-III synthase family. Monomer.

The protein resides in the cytoplasm. It localises to the cytosol. It carries out the reaction hydroxymethylbilane = uroporphyrinogen III + H2O. The protein operates within porphyrin-containing compound metabolism; protoporphyrin-IX biosynthesis; coproporphyrinogen-III from 5-aminolevulinate: step 3/4. Its function is as follows. Catalyzes cyclization of the linear tetrapyrrole, hydroxymethylbilane, to the macrocyclic uroporphyrinogen III, the branch point for the various sub-pathways leading to the wide diversity of porphyrins. Porphyrins act as cofactors for a multitude of enzymes that perform a variety of processes within the cell such as methionine synthesis (vitamin B12) or oxygen transport (heme). This Mus musculus (Mouse) protein is Uroporphyrinogen-III synthase (Uros).